We begin with the raw amino-acid sequence, 365 residues long: GDSL lipase (365 aa).

Residues 1-27 form the signal peptide; sequence MAVASRKLGALVLVAVLCLSLPTGCLS. The active-site Nucleophile is Ser-40. N-linked (GlcNAc...) asparagine glycans are attached at residues Asn-189 and Asn-310. Catalysis depends on charge relay system residues Asp-318 and His-321.

Belongs to the 'GDSL' lipolytic enzyme family. In terms of tissue distribution, restricted to the pericarp during achene maturation. Expressed in the leaves of mature plants and seedlings, as well as in buds and flowers. Present in disk florets.

The protein resides in the secreted. Its subcellular location is the extracellular space. The enzyme catalyses (Z,S)-pyrethrolone + (1R,3R)-chrysanthemoyl-CoA = pyrethrin I + CoA. It catalyses the reaction (Z,S)-pyrethrolone + (1R,3R)-pyrethroyl-CoA = pyrethrin II + CoA. The catalysed reaction is (Z,S)-jasmololone + (1R,3R)-chrysanthemoyl-CoA = jasmolin I + CoA. It carries out the reaction (Z,S)-cinerolone + (1R,3R)-chrysanthemoyl-CoA = cinerin I + CoA. The enzyme catalyses (Z,S)-jasmololone + (1R,3R)-pyrethroyl-CoA = jasmolin II + CoA. It catalyses the reaction (Z,S)-cinerolone + (1R,3R)-pyrethroyl-CoA = cinerin II + CoA. It functions in the pathway isoprenoid biosynthesis. Component of the monoterpenoid pyrethrins biosynthesis; pyrethrins are widely used plant-derived pesticide. Acyltransferase that catalyzes the esterification of terpene acids and lipid alcohol substrates into pyrethrins; mediates the transfer of a chrysanthemoyl moiety from the coenzyme A (CoA) thio-ester chrysanthemoyl CoA to pyrethrolone, and, to a lower extent, to jasmololone and cinerolone thus producing pyrethrins (e.g. pyrethrin type I). Can also use pyrethroyl CoA as substrate. Also has esterase activity, being able to cleave the ester bond of pyrethrin I, p-nitrophenyl butanoate and p-nitrophenyl octanoate to produce pyrethrolone and p-nitrophenol, respectively. In Tanacetum cinerariifolium (Dalmatian daisy), this protein is GDSL lipase.